A 361-amino-acid polypeptide reads, in one-letter code: Chitinase-3-like protein 1 (361 aa).

Residues 1 to 361 enclose the GH18 domain; it reads YKLICYYTSW…SAVKDVLAEV (361 aa). The cysteines at positions 5 and 30 are disulfide-linked. A glycan (N-linked (GlcNAc...) asparagine) is linked at asparagine 39. Residues 49-50, 76-79, tyrosine 120, 183-186, and arginine 241 contribute to the chitin site; these read EW, GGWN, and LTYD. Residues cysteine 278 and cysteine 342 are joined by a disulfide bond. An important for AKT1 activation and IL8 production region spans residues 302-316; the sequence is QWVAYDDQESVKNKA. Tryptophan 330 is a binding site for chitin. Asparagine 345 carries N-linked (GlcNAc...) asparagine glycosylation.

The protein belongs to the glycosyl hydrolase 18 family. As to quaternary structure, monomer. As to expression, detected in mammary gland.

It is found in the secreted. It localises to the extracellular space. The protein resides in the cytoplasm. Its subcellular location is the perinuclear region. The protein localises to the endoplasmic reticulum. Functionally, carbohydrate-binding lectin with a preference for chitin. Has no chitinase activity. May play a role in tissue remodeling and in the capacity of cells to respond to and cope with changes in their environment. Plays a role in T-helper cell type 2 (Th2) inflammatory response and IL-13-induced inflammation, regulating allergen sensitization, inflammatory cell apoptosis, dendritic cell accumulation and M2 macrophage differentiation. Facilitates invasion of pathogenic enteric bacteria into colonic mucosa and lymphoid organs. Mediates activation of AKT1 signaling pathway and subsequent IL8 production in colonic epithelial cells. Regulates antibacterial responses in lung by contributing to macrophage bacterial killing, controlling bacterial dissemination and augmenting host tolerance. Also regulates hyperoxia-induced injury, inflammation and epithelial apoptosis in lung. The protein is Chitinase-3-like protein 1 (CHI3L1) of Ovis aries (Sheep).